Reading from the N-terminus, the 453-residue chain is Beta-agarase AgaB34 (453 aa).

A signal peptide spans 1–23 (MKGFTKHSILMACSIGLAINATA). Residues 24–301 (ADWDNIPIPA…WIRVYKPTGG (278 aa)) form the GH16 domain. E147 functions as the Nucleophile in the catalytic mechanism. The active-site Proton donor is E152. Positions 313-453 (PSGYTNLQLA…GATNQRFKFL (141 aa)) constitute a Ricin B-type lectin domain. 3 disulfides stabilise this stretch: C327–C346, C375–C394, and C423–C442.

The protein belongs to the glycosyl hydrolase 16 family.

It localises to the secreted. It carries out the reaction Hydrolysis of (1-&gt;4)-beta-D-galactosidic linkages in agarose, giving the tetramer as the predominant product.. The polypeptide is Beta-agarase AgaB34 (Agarivorans albus).